Reading from the N-terminus, the 252-residue chain is Ribosomal RNA small subunit methyltransferase J (252 aa).

S-adenosyl-L-methionine contacts are provided by residues Arg-101 to Asp-102, Glu-117 to Arg-118, Ser-153 to Ser-154, and Asp-171.

Belongs to the methyltransferase superfamily. RsmJ family.

It is found in the cytoplasm. It catalyses the reaction guanosine(1516) in 16S rRNA + S-adenosyl-L-methionine = N(2)-methylguanosine(1516) in 16S rRNA + S-adenosyl-L-homocysteine + H(+). Functionally, specifically methylates the guanosine in position 1516 of 16S rRNA. The protein is Ribosomal RNA small subunit methyltransferase J of Salmonella choleraesuis (strain SC-B67).